Consider the following 434-residue polypeptide: Mitochondrial distribution and morphology protein 12 (434 aa).

The region spanning 1–434 is the SMP-LTD domain; the sequence is MSIDIDWERA…VYPSFWTFLV (434 aa). Positions 70 to 83 are enriched in acidic residues; it reads YEEDDNENFSESSE. Disordered stretches follow at residues 70 to 141 and 181 to 275; these read YEED…LRSP and TPLG…DDLP. Positions 86-97 are enriched in basic and acidic residues; that stretch reads SPTREPVDRYGS. Over residues 215 to 237 the composition is skewed to polar residues; the sequence is SAQSRPSTANTGNTLLSRGSMSS.

The protein belongs to the MDM12 family. Component of the ER-mitochondria encounter structure (ERMES) or MDM complex, composed of MMM1, MDM10, MDM12 and MDM34. An MMM1 homodimer associates with one molecule of MDM12 on each side in a pairwise head-to-tail manner, and the SMP-LTD domains of MMM1 and MDM12 generate a continuous hydrophobic tunnel for phospholipid trafficking.

The protein resides in the mitochondrion outer membrane. It is found in the endoplasmic reticulum membrane. In terms of biological role, component of the ERMES/MDM complex, which serves as a molecular tether to connect the endoplasmic reticulum (ER) and mitochondria. Components of this complex are involved in the control of mitochondrial shape and protein biogenesis, and function in nonvesicular lipid trafficking between the ER and mitochondria. MDM12 is required for the interaction of the ER-resident membrane protein MMM1 and the outer mitochondrial membrane-resident beta-barrel protein MDM10. The MDM12-MMM1 subcomplex functions in the major beta-barrel assembly pathway that is responsible for biogenesis of all mitochondrial outer membrane beta-barrel proteins, and acts in a late step after the SAM complex. The MDM10-MDM12-MMM1 subcomplex further acts in the TOM40-specific pathway after the action of the MDM12-MMM1 complex. Essential for establishing and maintaining the structure of mitochondria and maintenance of mtDNA nucleoids. The sequence is that of Mitochondrial distribution and morphology protein 12 from Blastomyces gilchristii (strain SLH14081) (Blastomyces dermatitidis).